The following is a 460-amino-acid chain: ATP synthase subunit beta (460 aa).

150–157 (GGAGVGKT) serves as a coordination point for ATP.

The protein belongs to the ATPase alpha/beta chains family. In terms of assembly, F-type ATPases have 2 components, CF(1) - the catalytic core - and CF(0) - the membrane proton channel. CF(1) has five subunits: alpha(3), beta(3), gamma(1), delta(1), epsilon(1). CF(0) has three main subunits: a(1), b(2) and c(9-12). The alpha and beta chains form an alternating ring which encloses part of the gamma chain. CF(1) is attached to CF(0) by a central stalk formed by the gamma and epsilon chains, while a peripheral stalk is formed by the delta and b chains.

It is found in the cell inner membrane. The catalysed reaction is ATP + H2O + 4 H(+)(in) = ADP + phosphate + 5 H(+)(out). Produces ATP from ADP in the presence of a proton gradient across the membrane. The catalytic sites are hosted primarily by the beta subunits. The polypeptide is ATP synthase subunit beta (Escherichia coli (strain SMS-3-5 / SECEC)).